A 475-amino-acid chain; its full sequence is MLRWLRAFVLPTAACHDAEPPTRYETLFRALDRNGDGVVDIGELQQGLQSLGIPLGQDAEEKIFTTGDVNKDGKLDFEEFMKYLKDHEKKMKLAFKSLDKNNDGKIEPSEIVQSLQMLGLHISEKQAELILQSIDSDGTMTVDWNEWRDYFLFNPVTDIEEIIRFWKHSTGIDIGDSLTIPDEFTEDEKKSGQWWRQLLAGGVAGAVSRTSTAPLDRLKVMMQVHGSKSMNIFGGFRQMVKEGGIRSLWRGNGTNVIKIAPETAVKFWAYEQYKKLLTEEGQKLGTFERFISGSMAGATAQTFIYPMEVLKTRLAVAKTGQYSGIYGCAKKILKHEGFGAFYKGYIPNLLGIIPYAGIDLAVYELLKSYWLDNFAKDSVNPGVMVLLSCGALSSTCGQLASYPLALVRTRMQAQATVEGAPQLSMVGLFQRIVSKEGVSGLYRGITPNFMKVLPAVGISYVVYENMKQTLGVAQK.

The tract at residues 1–173 is regulatory N-terminal domain; that stretch reads MLRWLRAFVL…RFWKHSTGID (173 aa). At 1-197 the chain is on the mitochondrial intermembrane side; the sequence is MLRWLRAFVL…EKKSGQWWRQ (197 aa). 4 EF-hand domains span residues 19-54, 55-88, 86-121, and 122-157; these read EPPTRYETLFRALDRNGDGVVDIGELQQGLQSLGIP, LGQDAEEKIFTTGDVNKDGKLDFEEFMKYLKDHE, DHEKKMKLAFKSLDKNNDGKIEPSEIVQSLQMLGLH, and ISEKQAELILQSIDSDGTMTVDWNEWRDYFLFNPVT. Ca(2+) is bound by residues D32, N34, D36, V38, E43, D68, N70, D72, K74, E79, D99, N101, D103, K105, E110, D135, D137, T139, T141, and E146. Residues 159 to 168 form a linker region region; that stretch reads IEEIIRFWKH. The tract at residues 174–475 is C-terminal transmembrane transporter domain; that stretch reads IGDSLTIPDE…MKQTLGVAQK (302 aa). Solcar repeat units follow at residues 192–276, 284–369, and 381–469; these read GQWW…YKKL, LGTF…LKSY, and PGVM…MKQT. Residues 198 to 215 traverse the membrane as a helical segment; it reads LLAGGVAGAVSRTSTAPL. Residues 216 to 250 are Mitochondrial matrix-facing; sequence DRLKVMMQVHGSKSMNIFGGFRQMVKEGGIRSLWR. Residues 251-270 traverse the membrane as a helical segment; sequence GNGTNVIKIAPETAVKFWAY. Over 271 to 293 the chain is Mitochondrial intermembrane; it reads EQYKKLLTEEGQKLGTFERFISG. A helical membrane pass occupies residues 294-307; it reads SMAGATAQTFIYPM. Topologically, residues 308–343 are mitochondrial matrix; sequence EVLKTRLAVAKTGQYSGIYGCAKKILKHEGFGAFYK. Position 318 is an N6-acetyllysine; alternate (K318). K318 carries the N6-succinyllysine; alternate modification. Residue K334 is modified to N6-acetyllysine. A helical transmembrane segment spans residues 344-363; that stretch reads GYIPNLLGIIPYAGIDLAVY. The Mitochondrial intermembrane segment spans residues 364 to 386; the sequence is ELLKSYWLDNFAKDSVNPGVMVL. Residues 387 to 404 form a helical membrane-spanning segment; the sequence is LSCGALSSTCGQLASYPL. Residues 405–443 are Mitochondrial matrix-facing; it reads ALVRTRMQAQATVEGAPQLSMVGLFQRIVSKEGVSGLYR. At K435 the chain carries N6-acetyllysine; alternate. K435 bears the N6-succinyllysine; alternate mark. The helical transmembrane segment at 444-463 threads the bilayer; it reads GITPNFMKVLPAVGISYVVY. The Mitochondrial intermembrane segment spans residues 464–475; that stretch reads ENMKQTLGVAQK.

It belongs to the mitochondrial carrier (TC 2.A.29) family. In terms of assembly, monomer.

The protein resides in the mitochondrion inner membrane. It catalyses the reaction Mg(2+)(out) + phosphate(in) + ATP(out) = Mg(2+)(in) + phosphate(out) + ATP(in). It carries out the reaction ADP(out) + phosphate(in) + H(+)(out) = ADP(in) + phosphate(out) + H(+)(in). The catalysed reaction is AMP(out) + phosphate(in) = AMP(in) + phosphate(out). The enzyme catalyses phosphate(in) + ATP(out) + 2 H(+)(out) = phosphate(out) + ATP(in) + 2 H(+)(in). It catalyses the reaction dADP(in) + ADP(out) = dADP(out) + ADP(in). It carries out the reaction Mg(2+)(in) + ADP(out) + ATP(in) + H(+)(out) = Mg(2+)(out) + ADP(in) + ATP(out) + H(+)(in). The catalysed reaction is ADP(out) + diphosphate(in) = ADP(in) + diphosphate(out). The enzyme catalyses dAMP(in) + ADP(out) + H(+)(out) = dAMP(out) + ADP(in) + H(+)(in). It catalyses the reaction 3'-AMP(in) + ADP(out) + H(+)(out) = 3'-AMP(out) + ADP(in) + H(+)(in). It carries out the reaction dAMP(out) + phosphate(in) = dAMP(in) + phosphate(out). The catalysed reaction is 3'-AMP(out) + phosphate(in) = 3'-AMP(in) + phosphate(out). The enzyme catalyses dADP(out) + phosphate(in) + H(+)(out) = dADP(in) + phosphate(out) + H(+)(in). Its activity is regulated as follows. Activated by an increase in cytosolic calcium levels that induce a conformational change of the N-terminal regulatory domain, uncapping the channel and allowing transport. Inhibited by bathophenanthroline, mersalyl, p-hydroxymercuribenzoate, bromcresol purple and tannic acid. Electroneutral antiporter that mediates the transport of adenyl nucleotides through the inner mitochondrial membrane. Originally identified as an ATP-magnesium/inorganic phosphate antiporter, it also acts as a broad specificity adenyl nucleotide antiporter. By regulating the mitochondrial matrix adenyl nucleotide pool could adapt to changing cellular energetic demands and indirectly regulate adenyl nucleotide-dependent metabolic pathways. In vitro, a low activity is also observed with guanyl and pyrimidine nucleotides. May play a role in protecting cells against oxidative stress-induced cell death, by buffering calcium levels in the mitochondrial matrix through the formation of calcium-phosphate precipitates. This chain is Mitochondrial adenyl nucleotide antiporter SLC25A24, found in Mus musculus (Mouse).